Consider the following 198-residue polypeptide: HTH-type transcriptional regulator BetI (198 aa).

The 61-residue stretch at 8 to 68 (PLRRRELIDA…ATMRHLLREL (61 aa)) folds into the HTH tetR-type domain. A DNA-binding region (H-T-H motif) is located at residues 31-50 (TVAQIAHEAGVSPALAHHYF).

The protein operates within amine and polyamine biosynthesis; betaine biosynthesis via choline pathway [regulation]. In terms of biological role, repressor involved in the biosynthesis of the osmoprotectant glycine betaine. It represses transcription of the choline transporter BetT and the genes of BetAB involved in the synthesis of glycine betaine. In Brucella suis (strain ATCC 23445 / NCTC 10510), this protein is HTH-type transcriptional regulator BetI.